The primary structure comprises 266 residues: MDTFQVIILALIQGLTEFLPISSSAHLILPAQLLDWQDQGLSFDVAVNTGSLLAVVMYFRKELYSMFMAWTGSIASGKQTQESKLSWWIILATIPAVIVGFTAKGFIETYLRNIEVIAATTIIFGLLLWWADRMQRQGFNEFQVGWKKALVIGLAQAMALIPGTSRSGATITAALMLGLSREAAARFSFLMSVPVSLGAAILVTKDLLSSGQAIDYQALGLGIVVSFIAAYVCIHYFLKIISKMGMTPFVIYRLVLGAVLCGFIFL.

Helical transmembrane passes span 1-21 (MDTF…FLPI), 39-59 (QGLS…VMYF), 87-107 (WWII…KGFI), 111-131 (LRNI…LWWA), 144-164 (VGWK…IPGT), 183-203 (AAAR…AILV), 218-238 (ALGL…HYFL), and 246-266 (MTPF…FIFL).

Belongs to the UppP family.

It localises to the cell inner membrane. It catalyses the reaction di-trans,octa-cis-undecaprenyl diphosphate + H2O = di-trans,octa-cis-undecaprenyl phosphate + phosphate + H(+). Its function is as follows. Catalyzes the dephosphorylation of undecaprenyl diphosphate (UPP). Confers resistance to bacitracin. The sequence is that of Undecaprenyl-diphosphatase from Shewanella piezotolerans (strain WP3 / JCM 13877).